The sequence spans 138 residues: Mu-like prophage FluMu G protein 2 (138 aa).

This sequence to phage Mu protein G.

In Haemophilus influenzae (strain ATCC 51907 / DSM 11121 / KW20 / Rd), this protein is Mu-like prophage FluMu G protein 2.